Here is a 311-residue protein sequence, read N- to C-terminus: tRNA-cytidine(32) 2-sulfurtransferase (311 aa).

The PP-loop motif motif lies at 45–50; that stretch reads SGGKDS. Positions 120, 123, and 211 each coordinate [4Fe-4S] cluster.

It belongs to the TtcA family. Homodimer. Mg(2+) is required as a cofactor. Requires [4Fe-4S] cluster as cofactor.

Its subcellular location is the cytoplasm. It carries out the reaction cytidine(32) in tRNA + S-sulfanyl-L-cysteinyl-[cysteine desulfurase] + AH2 + ATP = 2-thiocytidine(32) in tRNA + L-cysteinyl-[cysteine desulfurase] + A + AMP + diphosphate + H(+). It functions in the pathway tRNA modification. Catalyzes the ATP-dependent 2-thiolation of cytidine in position 32 of tRNA, to form 2-thiocytidine (s(2)C32). The sulfur atoms are provided by the cysteine/cysteine desulfurase (IscS) system. The chain is tRNA-cytidine(32) 2-sulfurtransferase from Shewanella pealeana (strain ATCC 700345 / ANG-SQ1).